The primary structure comprises 178 residues: Large ribosomal subunit protein uL6 (178 aa).

Belongs to the universal ribosomal protein uL6 family. Part of the 50S ribosomal subunit.

Functionally, this protein binds to the 23S rRNA, and is important in its secondary structure. It is located near the subunit interface in the base of the L7/L12 stalk, and near the tRNA binding site of the peptidyltransferase center. This chain is Large ribosomal subunit protein uL6, found in Enterococcus faecalis (strain ATCC 700802 / V583).